A 390-amino-acid chain; its full sequence is Putative gustatory receptor 36c (390 aa).

Residues 1–4 (MDLE) are Cytoplasmic-facing. Residues 5-25 (SFLLGAVYYYGLFIGLSNFEF) traverse the membrane as a helical segment. Topologically, residues 26-36 (DWNTGRVFTKK) are extracellular. Residues 37–57 (WSTLYAIALDSCIFALYIYHW) traverse the membrane as a helical segment. Residues 58-75 (TGNTNIVNAIFGRANMLH) are Cytoplasmic-facing. The chain crosses the membrane as a helical span at residues 76–96 (EYVVAILTGLRIVTGLFTLIL). The Extracellular portion of the chain corresponds to 97–132 (RWYQRCKMMDLASKVVRMYVARPQVRRMSRWGILTK). Residues 133–153 (FIFGSITDGLQMAMVLSAMGS) traverse the membrane as a helical segment. Residues 154 to 165 (VDSQFYLGLGLQ) are Cytoplasmic-facing. The helical transmembrane segment at 166 to 186 (YWMFVILNMAMMQQHMIMLFV) threads the bilayer. At 187–254 (RTQFQLINTE…MEEVFGIQGA (68 aa)) the chain is on the extracellular side. The chain crosses the membrane as a helical span at residues 255 to 275 (MTYGGYYLSSVGTCYLAYSIL). The Cytoplasmic segment spans residues 276–288 (KHGYENLSMTLST). A helical transmembrane segment spans residues 289-309 (VILAYSWCFFYYLDGMLNLSV). Residues 310–390 (MLHVQDDYWE…FLIQYDIEHF (81 aa)) are Extracellular-facing.

It belongs to the insect chemoreceptor superfamily. Gustatory receptor (GR) family. Gr22e subfamily. As to expression, expressed in neurons of the terminal external chemosensory organ of larvae.

It localises to the cell membrane. Functionally, probable gustatory receptor which mediates acceptance or avoidance behavior, depending on its substrates. In Drosophila melanogaster (Fruit fly), this protein is Putative gustatory receptor 36c (Gr36c).